Consider the following 534-residue polypeptide: Zinc finger protein 397 (534 aa).

Serine 31 carries the phosphoserine modification. The region spanning arginine 50–phenylalanine 132 is the SCAN box domain. Glycyl lysine isopeptide (Lys-Gly) (interchain with G-Cter in SUMO2) cross-links involve residues lysine 55, lysine 171, lysine 202, and lysine 252. The interval aspartate 197–alanine 242 is disordered. 9 consecutive C2H2-type zinc fingers follow at residues tyrosine 285–histidine 307, tyrosine 313–histidine 335, tyrosine 341–histidine 363, cysteine 369–histidine 391, tyrosine 397–histidine 419, tyrosine 425–histidine 447, tyrosine 453–histidine 475, tyrosine 481–histidine 503, and tyrosine 509–histidine 531.

The protein belongs to the krueppel C2H2-type zinc-finger protein family.

It is found in the nucleus. DNA-dependent transcriptional repressor. The chain is Zinc finger protein 397 (ZNF397) from Bos taurus (Bovine).